An 812-amino-acid chain; its full sequence is MNYQYTNYCCQSNITLPNSLTCTNAKIYVDVGRPNNCLGNDGDLYLDTNTNNLYYKIDGVWTLVSNLRGASGAQGVKGDPGSNGSKGTKGEKGDKGDKGSKGDNGEKGEKGDAGLNGLDGSKGDKGDDGSKGSKGNKGDAIKGEKGDKGEIGDKGDKGEDGLKGVKGDVGDKGDKGDKGDLGLKGVKGDKGITGDKGDKGEIGEKGNKGDKGDVGVKGDDGTKGEKGEKGTKGDKGNKGDKGEDGLKGENGDIGDKGDKGSKGEDGLKGDKGDIGDKGDKGSKGEDGLKGSKGDKGEIGNKGDKGDKGDIGIKGDKGDIGDKGDKGDPGLKGEKGEKGDKGDIGDKGETGSKGSKGDKGDKGDKGDVGDKGSKGDKGDIGEKGDKGSKGDKGDKGDKGDKGDLGDKGDKGDKGETGEKGSKGDKGDKGDKGETGSKGDVGLKGSKGDKGDKGIKGDVGDKGDIGITGDKGDKGVKGDKGDIGLKGDKGDKGTKGDKGSKGDNGSKGETGAKGDKGDKGDKGIKGDTGTKGVKGDKGSKGDKGDLGDTGIKGDKGEKGDPGIKGEAGTNSPFIGTFIDNVPGSGTTIVPFGAIFAYLSAAGGGGGGGGISDGNGSPGGGAAGTVYLYPLTVTSGLVVNYTIGSGGTAGTPVAAGGAGGNTTITIGTLNFTLNGGGGGGIGGTVGAINGGAGGSVTTPLGTTPGGSGGVGNGGPLPGNGQVGLFAFSGAGGGQARTNGASTGGFPGGQTDSNTFGGGGGGASGFAKGGDGEQEIPTTIPAQSGTLGSGGGGPTDVSASGGRGGDGFVRLDYYSA.

N-linked (GlcNAc...) asparagine; by host glycosylation is found at N13 and N83. 3 consecutive Collagen-like domains span residues 69 to 128 (GASG…KGDD), 143 to 502 (GEKG…KGDN), and 506 to 565 (GETG…KGEA). A disordered region spans residues 71–568 (SGAQGVKGDP…PGIKGEAGTN (498 aa)). Basic and acidic residues-rich tracts occupy residues 88-112 (TKGEKGDKGDKGSKGDNGEKGEKGD), 121-435 (SKGD…ETGS), 444-523 (SKGD…KGIK), and 531-561 (VKGDKGSKGDKGDLGDTGIKGDKGEKGDPGI). Residue N502 is glycosylated (N-linked (GlcNAc...) asparagine; by host). N-linked (GlcNAc...) asparagine; by host glycosylation is found at N637, N658, and N667. Residues 730-802 (GQARTNGAST…VSASGGRGGD (73 aa)) are disordered. Over residues 752 to 765 (FGGGGGGASGFAKG) the composition is skewed to gly residues.

Post-translationally, may be hydroxylated on lysine by the viral-encoded procollagen-lysine,2-oxoglutarate 5-dioxygenase.

It localises to the virion. In terms of biological role, may participate in the formation of a layer of cross-linked glycosylated fibrils at the viral surface thus giving it a hairy-like appearance. The chain is Collagen-like protein 5 from Acanthamoeba polyphaga (Amoeba).